The chain runs to 176 residues: Ribosome maturation factor RimM (176 aa).

One can recognise a PRC barrel domain in the interval 104 to 176; the sequence is EDEYYFYEIL…KIIAKEMEWI (73 aa).

Belongs to the RimM family. In terms of assembly, binds ribosomal protein uS19.

It is found in the cytoplasm. In terms of biological role, an accessory protein needed during the final step in the assembly of 30S ribosomal subunit, possibly for assembly of the head region. Essential for efficient processing of 16S rRNA. May be needed both before and after RbfA during the maturation of 16S rRNA. It has affinity for free ribosomal 30S subunits but not for 70S ribosomes. The protein is Ribosome maturation factor RimM of Thermotoga maritima (strain ATCC 43589 / DSM 3109 / JCM 10099 / NBRC 100826 / MSB8).